The primary structure comprises 201 residues: 3-isopropylmalate dehydratase small subunit (201 aa).

It belongs to the LeuD family. LeuD type 1 subfamily. Heterodimer of LeuC and LeuD.

It catalyses the reaction (2R,3S)-3-isopropylmalate = (2S)-2-isopropylmalate. It participates in amino-acid biosynthesis; L-leucine biosynthesis; L-leucine from 3-methyl-2-oxobutanoate: step 2/4. Its function is as follows. Catalyzes the isomerization between 2-isopropylmalate and 3-isopropylmalate, via the formation of 2-isopropylmaleate. In Shewanella sp. (strain ANA-3), this protein is 3-isopropylmalate dehydratase small subunit.